Reading from the N-terminus, the 237-residue chain is Zinc finger protein 22 (237 aa).

The tract at residues 1 to 33 is disordered; that stretch reads MRLGKPKGGISRSASQGKTYESKRKTARQRQKW. N6-acetyllysine occurs at positions 18 and 23. 5 C2H2-type zinc fingers span residues 55-82, 83-110, 111-138, 139-166, and 167-194; these read YKCTKCSKSFSQSSTLFQHKKIHTGKKS, HKCADCGKSFFQSSNLIQHRRIHTGEKP, YKCDECGERFKQSSNLIQHQRIHTGEKP, YCCDECGRCFSQSSHLIQHQRTHTGEKP, and YQCEECDKCFSQSSHLRQHMKVHKEKKS. Over residues 188–217 the composition is skewed to basic residues; sequence VHKEKKSHKRGKNARAKTHPVSWKRGKGRK. The disordered stretch occupies residues 188 to 218; sequence VHKEKKSHKRGKNARAKTHPVSWKRGKGRKA.

Belongs to the krueppel C2H2-type zinc-finger protein family. Highly expressed in the ameloblast layer of mandibular incisors, moderately expressed in submandibular gland, calvaria, kidney and lung, and expressed at low levels in brain and thymus.

It is found in the nucleus. In terms of biological role, binds DNA through the consensus sequence 5'-CAATG-3'. May be involved in transcriptional regulation and may play a role in tooth formation. In Rattus norvegicus (Rat), this protein is Zinc finger protein 22 (Znf22).